A 446-amino-acid chain; its full sequence is Corrinoid/iron-sulfur protein large subunit (446 aa).

In terms of domain architecture, 4Fe-4S spans P2–P59. C17, C20, C25, and C42 together coordinate [4Fe-4S] cluster. 5-methoxybenzimidazolylcob(I)amide contacts are provided by residues T340, T346, G370–V373, and A433.

In terms of assembly, heterohexamer composed of 2 subunits of AcsC, 2 subunits of AcsD and 2 subunits of AcsE. The cofactor is [4Fe-4S] cluster.

Its function is as follows. Acts as a methyl group carrier in the anaerobic acetyl-CoA pathway (Wood-Ljungdahl pathway) of carbon monoxide and carbon dioxide fixation. Binds the corrinoid 5-methoxybenzimidazolylcobamide which is then methylated by the AcsE subunit. This is Corrinoid/iron-sulfur protein large subunit (acsC) from Moorella thermoacetica (Clostridium thermoaceticum).